The primary structure comprises 438 residues: Argininosuccinate lyase (438 aa).

Belongs to the lyase 1 family. Argininosuccinate lyase subfamily.

It is found in the cytoplasm. It carries out the reaction 2-(N(omega)-L-arginino)succinate = fumarate + L-arginine. The protein operates within amino-acid biosynthesis; L-arginine biosynthesis; L-arginine from L-ornithine and carbamoyl phosphate: step 3/3. This Clostridium kluyveri (strain NBRC 12016) protein is Argininosuccinate lyase.